The following is a 171-amino-acid chain: Probable deoxyuridine 5'-triphosphate nucleotidohydrolase (171 aa).

This sequence belongs to the dCTP deaminase family. Archaeal dUTPase subfamily.

The catalysed reaction is dUTP + H2O = dUMP + diphosphate + H(+). It participates in pyrimidine metabolism; dUMP biosynthesis; dUMP from dCTP (dUTP route): step 2/2. Functionally, this enzyme is involved in nucleotide metabolism: it produces dUMP, the immediate precursor of thymidine nucleotides and it decreases the intracellular concentration of dUTP so that uracil cannot be incorporated into DNA. The polypeptide is Probable deoxyuridine 5'-triphosphate nucleotidohydrolase (Methanosarcina barkeri (strain Fusaro / DSM 804)).